Here is a 502-residue protein sequence, read N- to C-terminus: Cytochrome P450 monooxygenase prhN (502 aa).

Residues 14 to 30 form a helical membrane-spanning segment; that stretch reads SGALLIVGILLLRWALW. Asn-165 is a glycosylation site (N-linked (GlcNAc...) asparagine). Residue Cys-443 coordinates heme. Asn-474 is a glycosylation site (N-linked (GlcNAc...) asparagine).

This sequence belongs to the cytochrome P450 family. Requires heme as cofactor.

Its subcellular location is the membrane. Its pathway is secondary metabolite biosynthesis; terpenoid biosynthesis. In terms of biological role, cytochrome P450 monooxygenase; part of the gene cluster that mediates the biosynthesis of paraherquonin, a meroterpenoid with a unique, highly congested hexacyclic molecular architecture. The first step of the pathway is the synthesis of 3,5-dimethylorsellinic acid (DMOA) by the polyketide synthase prhL. Synthesis of DMOA is followed by farnesylation by the prenyltransferase prhE, methylesterification by the methyl-transferase prhM, epoxidation of the prenyl chain by the flavin-dependent monooxygenase prhF, and cyclization of the farnesyl moiety by the terpene cyclase prhH, to yield the tetracyclic intermediate, protoaustinoid A. The short chain dehydrogenase prhI then oxidizes the C-3 alcohol group of the terpene cyclase product to transform protoaustinoid A into protoaustinoid B. The FAD-binding monooxygenase prhJ catalyzes the oxidation of protoaustinoid B into preaustinoid A which is further oxidized into preaustinoid A1 by FAD-binding monooxygenase phrK. Finally, prhA leads to berkeleydione via the berkeleyone B intermediate. PrhA is a multifunctional dioxygenase that first desaturates at C5-C6 to form berkeleyone B, followed by rearrangement of the A/B-ring to form the cycloheptadiene moiety in berkeleydione. Berkeleydione serves as the key intermediate for the biosynthesis of paraherquonin as well as many other meroterpenoids. The cytochrome P450 monooxygenases prhB, prhD, and prhN, as well as the isomerase prhC, are probably involved in the late stage of paraherquonin biosynthesis, after the production of berkeleydione. Especially prhC might be a multifunctional enzyme that catalyzes the D-ring expansion via intramolecular methoxy rearrangement, as well as the hydrolysis of the expanded D-ring. This chain is Cytochrome P450 monooxygenase prhN, found in Penicillium brasilianum.